Reading from the N-terminus, the 220-residue chain is Phosphatidylinositol phosphate synthase (220 aa).

2 helical membrane-spanning segments follow: residues 21 to 46 (LLRAGFTPDTVTIFGTAASVVAALTL) and 52 to 72 (LFWGGMAVWLFAMFDMLDGAM). 29-32 (DTVT) is an a CDP-1,2-diacyl-sn-glycerol binding site. Residues aspartate 66 and aspartate 69 each contribute to the Mg(2+) site. Residues glycine 70, arginine 74, and threonine 80 each coordinate a CDP-1,2-diacyl-sn-glycerol. Residues aspartate 87 and aspartate 91 each coordinate Mg(2+). The active-site Proton acceptor is aspartate 91. Helical transmembrane passes span 93–110 (VADGAVFAGLVWWAAFGW), 116–134 (VVATLICMITSQVISYVKA), 154–171 (LIIVLAGAIFSGGFGVQW), and 177–194 (MWVLAVASLVTVAQRMHA).

It belongs to the CDP-alcohol phosphatidyltransferase class-I family. In terms of assembly, homodimer. Mg(2+) is required as a cofactor.

It is found in the cell membrane. It carries out the reaction a CDP-1,2-diacyl-sn-glycerol + 1D-myo-inositol 3-phosphate = a 1,2-diacyl-sn-glycero-3-phospho-(1D-myo-inositol-3-phosphate) + CMP + H(+). The enzyme catalyses 1,2-di-(9Z-octadecenoyl)-sn-glycero-3-cytidine-5'-diphosphate + 1D-myo-inositol 3-phosphate = 1,2-di-(9Z-octadecenoyl)-sn-glycero-3-phospho-(1D-myo-inositol-3-phosphate) + CMP + H(+). It participates in phospholipid metabolism; phosphatidylinositol phosphate biosynthesis. Functionally, catalyzes the conjugation of the 1'-hydroxyl group of D-myo-inositol-3-phosphate (also named L-myo-inositol-1-phosphate) with a lipid tail of cytidine diphosphate diacylglycerol (CDP-DAG), forming phosphatidylinositol phosphate (PIP) and CMP. PIP is a precursor of phosphatidylinositol (PI) which is an essential lipid for mycobacteria required for formation of their cell wall. This chain is Phosphatidylinositol phosphate synthase, found in Mycobacteroides abscessus (strain ATCC 19977 / DSM 44196 / CCUG 20993 / CIP 104536 / JCM 13569 / NCTC 13031 / TMC 1543 / L948) (Mycobacterium abscessus).